A 307-amino-acid polypeptide reads, in one-letter code: Transmembrane and coiled-coil domain-containing protein 5B (307 aa).

Positions 20–212 (TLEAIKQNLK…SKAQNDSSQV (193 aa)) form a coiled coil. The chain crosses the membrane as a helical span at residues 246–268 (YLFFMVMIVIRLLGYVFFHLQYV).

This sequence belongs to the TMCO5 family.

The protein localises to the membrane. The polypeptide is Transmembrane and coiled-coil domain-containing protein 5B (Tmco5b) (Mus musculus (Mouse)).